The following is a 224-amino-acid chain: Cytidylate kinase (224 aa).

Gly11–Thr19 is a binding site for ATP.

The protein belongs to the cytidylate kinase family. Type 1 subfamily.

Its subcellular location is the cytoplasm. It catalyses the reaction CMP + ATP = CDP + ADP. It carries out the reaction dCMP + ATP = dCDP + ADP. This is Cytidylate kinase from Listeria monocytogenes serotype 4a (strain HCC23).